A 269-amino-acid polypeptide reads, in one-letter code: Tryptophan synthase alpha chain (269 aa).

Active-site proton acceptor residues include Glu-45 and Asp-56.

It belongs to the TrpA family. In terms of assembly, tetramer of two alpha and two beta chains.

The enzyme catalyses (1S,2R)-1-C-(indol-3-yl)glycerol 3-phosphate + L-serine = D-glyceraldehyde 3-phosphate + L-tryptophan + H2O. The protein operates within amino-acid biosynthesis; L-tryptophan biosynthesis; L-tryptophan from chorismate: step 5/5. Functionally, the alpha subunit is responsible for the aldol cleavage of indoleglycerol phosphate to indole and glyceraldehyde 3-phosphate. The protein is Tryptophan synthase alpha chain of Shouchella clausii (strain KSM-K16) (Alkalihalobacillus clausii).